Consider the following 258-residue polypeptide: Regulatory protein RecX (258 aa).

Belongs to the RecX family.

The protein resides in the cytoplasm. In terms of biological role, modulates RecA activity. This chain is Regulatory protein RecX, found in Streptococcus pneumoniae (strain P1031).